A 569-amino-acid polypeptide reads, in one-letter code: Proline--tRNA ligase (569 aa).

Belongs to the class-II aminoacyl-tRNA synthetase family. ProS type 1 subfamily. As to quaternary structure, homodimer.

It is found in the cytoplasm. It carries out the reaction tRNA(Pro) + L-proline + ATP = L-prolyl-tRNA(Pro) + AMP + diphosphate. Catalyzes the attachment of proline to tRNA(Pro) in a two-step reaction: proline is first activated by ATP to form Pro-AMP and then transferred to the acceptor end of tRNA(Pro). As ProRS can inadvertently accommodate and process non-cognate amino acids such as alanine and cysteine, to avoid such errors it has two additional distinct editing activities against alanine. One activity is designated as 'pretransfer' editing and involves the tRNA(Pro)-independent hydrolysis of activated Ala-AMP. The other activity is designated 'posttransfer' editing and involves deacylation of mischarged Ala-tRNA(Pro). The misacylated Cys-tRNA(Pro) is not edited by ProRS. The sequence is that of Proline--tRNA ligase from Campylobacter jejuni subsp. doylei (strain ATCC BAA-1458 / RM4099 / 269.97).